The chain runs to 302 residues: Methionyl-tRNA formyltransferase (302 aa).

107 to 110 (SDLP) lines the (6S)-5,6,7,8-tetrahydrofolate pocket.

This sequence belongs to the Fmt family.

It catalyses the reaction L-methionyl-tRNA(fMet) + (6R)-10-formyltetrahydrofolate = N-formyl-L-methionyl-tRNA(fMet) + (6S)-5,6,7,8-tetrahydrofolate + H(+). In terms of biological role, attaches a formyl group to the free amino group of methionyl-tRNA(fMet). The formyl group appears to play a dual role in the initiator identity of N-formylmethionyl-tRNA by promoting its recognition by IF2 and preventing the misappropriation of this tRNA by the elongation apparatus. This Rickettsia massiliae (strain Mtu5) protein is Methionyl-tRNA formyltransferase.